The sequence spans 408 residues: GTPase Obg (408 aa).

The 159-residue stretch at 1 to 159 (MKFVDEVSIR…RDLKMEMKVL (159 aa)) folds into the Obg domain. Residues 127 to 150 (NTRFKSSTNRAPRQTTPGKPGDQR) form a disordered region. Positions 129–143 (RFKSSTNRAPRQTTP) are enriched in polar residues. An OBG-type G domain is found at 160-333 (ADVGLLGLPN…LSHDLMRYLE (174 aa)). GTP-binding positions include 166-173 (GLPNAGKS), 191-195 (FTTLV), 213-216 (DIPG), 283-286 (NKSD), and 314-316 (SAI). Mg(2+)-binding residues include Ser-173 and Thr-193. Positions 382-408 (HDIGDDDGWDDDFEDDEDGPEIIYVRD) are disordered. Residues 385–401 (GDDDGWDDDFEDDEDGP) show a composition bias toward acidic residues.

It belongs to the TRAFAC class OBG-HflX-like GTPase superfamily. OBG GTPase family. As to quaternary structure, monomer. The cofactor is Mg(2+).

The protein resides in the cytoplasm. An essential GTPase which binds GTP, GDP and possibly (p)ppGpp with moderate affinity, with high nucleotide exchange rates and a fairly low GTP hydrolysis rate. Plays a role in control of the cell cycle, stress response, ribosome biogenesis and in those bacteria that undergo differentiation, in morphogenesis control. The chain is GTPase Obg from Pseudomonas putida (strain GB-1).